Reading from the N-terminus, the 479-residue chain is Chromosomal replication initiator protein DnaA (479 aa).

The segment at 1-74 (MFSGVVMAWQ…RSLTGVDSSI (74 aa)) is domain I, interacts with DnaA modulators. Positions 74–142 (ITDVRFLEKK…SVPKNNASIR (69 aa)) are domain II. A domain III, AAA+ region region spans residues 143–360 (ALHPRYTFDE…SAITAIGARA (218 aa)). ATP is bound by residues G187, G189, K190, and S191. Residues 361-479 (RLMGGYIDMN…NLLSDKVKQI (119 aa)) form a domain IV, binds dsDNA region.

This sequence belongs to the DnaA family. Oligomerizes as a right-handed, spiral filament on DNA at oriC.

It localises to the cytoplasm. Functionally, plays an essential role in the initiation and regulation of chromosomal replication. ATP-DnaA binds to the origin of replication (oriC) to initiate formation of the DNA replication initiation complex once per cell cycle. Binds the DnaA box (a 9 base pair repeat at the origin) and separates the double-stranded (ds)DNA. Forms a right-handed helical filament on oriC DNA; dsDNA binds to the exterior of the filament while single-stranded (ss)DNA is stabiized in the filament's interior. The ATP-DnaA-oriC complex binds and stabilizes one strand of the AT-rich DNA unwinding element (DUE), permitting loading of DNA polymerase. After initiation quickly degrades to an ADP-DnaA complex that is not apt for DNA replication. Binds acidic phospholipids. The polypeptide is Chromosomal replication initiator protein DnaA (Desulfotalea psychrophila (strain LSv54 / DSM 12343)).